The sequence spans 225 residues: Phosphoserine phosphatase (225 aa).

M1 is subject to N-acetylmethionine. Residue D20 is the Nucleophile of the active site. Mg(2+)-binding residues include D20 and D22. Residue 20–22 coordinates L-serine; that stretch reads DVD. The Proton donor role is filled by D22. M52 is an O-phospho-L-serine binding site. G53 is a binding site for phosphate. L-serine is bound by residues 109–111 and K158; that span reads SGG. O-phospho-L-serine is bound by residues 109-111 and K158; that span reads SGG. Residue D179 coordinates Mg(2+). Residue T182 participates in O-phospho-L-serine binding. Phosphate is bound at residue T182.

Belongs to the HAD-like hydrolase superfamily. SerB family. Homodimer. Requires Mg(2+) as cofactor.

Its subcellular location is the cytoplasm. It is found in the cytosol. The catalysed reaction is O-phospho-L-serine + H2O = L-serine + phosphate. It catalyses the reaction O-phospho-D-serine + H2O = D-serine + phosphate. It participates in amino-acid biosynthesis; L-serine biosynthesis; L-serine from 3-phospho-D-glycerate: step 3/3. Catalyzes the last irreversible step in the biosynthesis of L-serine from carbohydrates, the dephosphorylation of O-phospho-L-serine to L-serine. L-serine can then be used in protein synthesis, to produce other amino acids, in nucleotide metabolism or in glutathione synthesis, or can be racemized to D-serine, a neuromodulator. May also act on O-phospho-D-serine. This is Phosphoserine phosphatase from Mus musculus (Mouse).